Consider the following 299-residue polypeptide: uncharacterized protein (299 aa).

Residues T47 and Y109 each act as charge relay system in the active site. Residue Y138 is the Proton donor of the active site. Residue K168 is the Schiff-base intermediate with substrate of the active site.

Belongs to the DapA family. Homotetramer.

It localises to the cytoplasm. This is an uncharacterized protein from Chloroflexus aurantiacus (strain ATCC 29366 / DSM 635 / J-10-fl).